The sequence spans 363 residues: Methyltransferase pynC (363 aa).

Residues 199 to 200 (GG), Asp-225, 254 to 255 (SF), Arg-270, and Arg-271 each bind S-adenosyl-L-methionine.

Belongs to the class I-like SAM-binding methyltransferase superfamily. Cation-independent O-methyltransferase family.

The protein operates within secondary metabolite biosynthesis. Functionally, methyltransferase; part of the gene cluster that mediates the biosynthesis of pyranonigrins, a family of antioxidative compounds. The first step of pyranonigrins biosynthesis is performed by the hybrid PKS-NRPS synthetase that condenses 6 malonyl-CoA units to an acetyl starter unit, to form a 1,3,5-trioxotetradecane-6,8-dienyl-ACP. The enoyl reductase (ER) domain of pynA is likely to be functional during the first two rounds of polyketide chain extension, to generate the saturated C-C bonds of the alkyl side chain. PynA subsequently forms the amide bond between the acyl chain and L-serine. Although pynA has a terminal reductase domain, it appears to require the thioesterase pynI for the release of the straight-chain intermediate from pynA via the formation of a tetramic acid pyranonigrin J. The methyltransferase pynC then coverts pyranonigrin J to pyranonigrin I via N-methylation. The FAD-dependent monooxygenase pynG catalyzes an epoxidation-mediated cyclization to form the dihydro-gamma-pyrone moiety, followed by pynD-catalyzed oxidation of the alcohol to the ketone and enolization to yield the characteristic tetramic acid-fused gamma-pyrone core of pyranonigrin H. Pyranonigrin H is substrate of pynH for dehydration-mediated exo-methylene formation from the serine side chain to produce pyranonigrin E, before the oxidase pynE reduces the exo-methylene of pyranonigrin E into a pendant methyl to form pyranonigrin G. The FAD-linked oxidoreductase pynB performs the reverse reaction and converts pyranonigrin G back to pyranonigrin E. In Aspergillus niger (strain ATCC MYA-4892 / CBS 513.88 / FGSC A1513), this protein is Methyltransferase pynC.